The chain runs to 425 residues: MAVLIFLGCLLGGIAIGLPIAWALLLCGAALMFWLDMFDVQIMAQTLVNGADSFSLLAIPFFVLAGEIMNAGGLSKRIVDLPMKLVGHKPGGLGYVGVLAAMIMASLSGSAVADTAAVAALLVPMMRSANYPVNRAAGLIASGGIIAPIIPPSIPFIIFGVSSGLSISKLFMAGIAPGMMMGATLMLTWWWQASRLNLPRQQKATMQEIWHSFVSGIWALFLPVIIIGGFRSGLFTPTEAGAVAAFYALFVATVIYREMTFATLWHVLIGAAKTTSVVMFLVASAQVSAWLITIAELPMMVSDLLQPLVDSPRLLFIVIMVAILIVGMVMDLTPTVLILTPVLMPLVKEAGIDPIYFGVMFIINCSIGLITPPIGNVLNVISGVAKLKFDDAVRGVFPYVLVLYSLLVVFVFIPDLIILPLKWIN.

A run of 11 helical transmembrane segments spans residues 3–23, 54–74, 93–113, 139–159, 170–190, 209–229, 235–255, 277–297, 314–334, 355–375, and 399–419; these read VLIFLGCLLGGIAIGLPIAWA, FSLLAIPFFVLAGEIMNAGGL, LGYVGVLAAMIMASLSGSAVA, LIASGGIIAPIIPPSIPFIIF, LFMAGIAPGMMMGATLMLTWW, IWHSFVSGIWALFLPVIIIGG, FTPTEAGAVAAFYALFVATVI, VVMFLVASAQVSAWLITIAEL, LLFIVIMVAILIVGMVMDLTP, IYFGVMFIINCSIGLITPPIG, and YVLVLYSLLVVFVFIPDLIIL.

It belongs to the TRAP transporter large permease family. In terms of assembly, the complex comprises the extracytoplasmic solute receptor protein YiaO, and the two transmembrane proteins YiaM and YiaN.

It is found in the cell inner membrane. In terms of biological role, part of the tripartite ATP-independent periplasmic (TRAP) transport system YiaMNO involved in the uptake of 2,3-diketo-L-gulonate. This chain is 2,3-diketo-L-gulonate TRAP transporter large permease protein YiaN (yiaN), found in Escherichia coli (strain K12).